The primary structure comprises 257 residues: UPF0246 protein BF4021 (257 aa).

Belongs to the UPF0246 family.

In Bacteroides fragilis (strain YCH46), this protein is UPF0246 protein BF4021.